A 901-amino-acid chain; its full sequence is Protein translocase subunit SecA (901 aa).

Residues glutamine 87, glycine 105–threonine 109, and aspartate 512 each bind ATP. Cysteine 885, cysteine 887, cysteine 896, and histidine 897 together coordinate Zn(2+).

Belongs to the SecA family. As to quaternary structure, monomer and homodimer. Part of the essential Sec protein translocation apparatus which comprises SecA, SecYEG and auxiliary proteins SecDF-YajC and YidC. Requires Zn(2+) as cofactor.

The protein localises to the cell inner membrane. It localises to the cytoplasm. The catalysed reaction is ATP + H2O + cellular proteinSide 1 = ADP + phosphate + cellular proteinSide 2.. Functionally, part of the Sec protein translocase complex. Interacts with the SecYEG preprotein conducting channel. Has a central role in coupling the hydrolysis of ATP to the transfer of proteins into and across the cell membrane, serving both as a receptor for the preprotein-SecB complex and as an ATP-driven molecular motor driving the stepwise translocation of polypeptide chains across the membrane. The protein is Protein translocase subunit SecA of Salmonella paratyphi B (strain ATCC BAA-1250 / SPB7).